We begin with the raw amino-acid sequence, 391 residues long: Septation protein etd1 (391 aa).

The interval 49-68 is disordered; the sequence is MKSYGSDITPRRPKQLGLPK.

Functionally, involved in septation. The protein is Septation protein etd1 (etd1) of Schizosaccharomyces pombe (strain 972 / ATCC 24843) (Fission yeast).